We begin with the raw amino-acid sequence, 680 residues long: tRNA 5-methylaminomethyl-2-thiouridine biosynthesis bifunctional protein MnmC (680 aa).

Residues 1 to 267 (MTAEPNKPCQ…MAAILSSDAP (267 aa)) form a tRNA (mnm(5)s(2)U34)-methyltransferase region. Residues 273–680 (IGGGLASAHL…LRKLLKGKSL (408 aa)) form an FAD-dependent cmnm(5)s(2)U34 oxidoreductase region.

In the N-terminal section; belongs to the methyltransferase superfamily. tRNA (mnm(5)s(2)U34)-methyltransferase family. This sequence in the C-terminal section; belongs to the DAO family. It depends on FAD as a cofactor.

The protein localises to the cytoplasm. It carries out the reaction 5-aminomethyl-2-thiouridine(34) in tRNA + S-adenosyl-L-methionine = 5-methylaminomethyl-2-thiouridine(34) in tRNA + S-adenosyl-L-homocysteine + H(+). In terms of biological role, catalyzes the last two steps in the biosynthesis of 5-methylaminomethyl-2-thiouridine (mnm(5)s(2)U) at the wobble position (U34) in tRNA. Catalyzes the FAD-dependent demodification of cmnm(5)s(2)U34 to nm(5)s(2)U34, followed by the transfer of a methyl group from S-adenosyl-L-methionine to nm(5)s(2)U34, to form mnm(5)s(2)U34. This is tRNA 5-methylaminomethyl-2-thiouridine biosynthesis bifunctional protein MnmC from Shewanella sp. (strain W3-18-1).